A 293-amino-acid chain; its full sequence is Cytidine deaminase 8 (293 aa).

2 consecutive CMP/dCMP-type deaminase domains span residues 20–151 (FTPQ…LISQ) and 181–293 (EHCN…LHCK). Residue 61–63 (NVE) coordinates substrate. Histidine 74 provides a ligand contact to Zn(2+). Residue glutamate 76 is the Proton donor of the active site. 2 residues coordinate Zn(2+): cysteine 107 and cysteine 110.

The protein belongs to the cytidine and deoxycytidylate deaminase family. As to quaternary structure, homodimer. Requires Zn(2+) as cofactor.

It catalyses the reaction cytidine + H2O + H(+) = uridine + NH4(+). The catalysed reaction is 2'-deoxycytidine + H2O + H(+) = 2'-deoxyuridine + NH4(+). In terms of biological role, this enzyme scavenges exogenous and endogenous cytidine and 2'-deoxycytidine for UMP synthesis. This is Cytidine deaminase 8 (CDA8) from Arabidopsis thaliana (Mouse-ear cress).